The following is a 335-amino-acid chain: UPF0353 protein NFA_34780 (335 aa).

The next 2 membrane-spanning stretches (helical) occupy residues 8-28 and 61-81; these read ALIW…YVLV and IALM…PTSV. A VWFA domain is found at 90–295; sequence TVVLVMDVSL…EELTAVYDTL (206 aa). A helical membrane pass occupies residues 310-330; that stretch reads RPWLLLGMLVVAAGIVTGLLY.

Belongs to the UPF0353 family.

The protein localises to the cell membrane. The sequence is that of UPF0353 protein NFA_34780 from Nocardia farcinica (strain IFM 10152).